Reading from the N-terminus, the 861-residue chain is Leucine--tRNA ligase (861 aa).

The 'HIGH' region motif lies at 42 to 52 (PYPSGRLHMGH). A 'KMSKS' region motif is present at residues 619-623 (KMSKS). Lys622 is an ATP binding site.

Belongs to the class-I aminoacyl-tRNA synthetase family.

Its subcellular location is the cytoplasm. It carries out the reaction tRNA(Leu) + L-leucine + ATP = L-leucyl-tRNA(Leu) + AMP + diphosphate. This is Leucine--tRNA ligase from Haemophilus influenzae (strain 86-028NP).